The sequence spans 148 residues: Deoxyuridine 5'-triphosphate nucleotidohydrolase (148 aa).

Residues 67 to 69 (RSG), Asn-80, 84 to 86 (LID), and Met-94 each bind substrate.

It belongs to the dUTPase family. Mg(2+) is required as a cofactor.

The enzyme catalyses dUTP + H2O = dUMP + diphosphate + H(+). It participates in pyrimidine metabolism; dUMP biosynthesis; dUMP from dCTP (dUTP route): step 2/2. This enzyme is involved in nucleotide metabolism: it produces dUMP, the immediate precursor of thymidine nucleotides and it decreases the intracellular concentration of dUTP so that uracil cannot be incorporated into DNA. This Burkholderia lata (strain ATCC 17760 / DSM 23089 / LMG 22485 / NCIMB 9086 / R18194 / 383) protein is Deoxyuridine 5'-triphosphate nucleotidohydrolase.